The chain runs to 313 residues: Phosphoenolpyruvate phosphomutase (313 aa).

The tract at residues 1 to 23 is disordered; the sequence is MNATERPGSDGTGSPESVGSRLK. The active-site Nucleophile is the Asp69.

It belongs to the isocitrate lyase/PEP mutase superfamily. PEP mutase family.

The catalysed reaction is phosphoenolpyruvate + H(+) = 3-phosphonopyruvate. It functions in the pathway secondary metabolite biosynthesis; bialaphos biosynthesis. Its function is as follows. Formation of a carbon-phosphorus bond by converting phosphoenolpyruvate (PEP) to phosphonopyruvate (P-Pyr). The polypeptide is Phosphoenolpyruvate phosphomutase (ppm) (Streptomyces viridochromogenes (strain DSM 40736 / JCM 4977 / BCRC 1201 / Tue 494)).